The chain runs to 461 residues: Argininosuccinate lyase (461 aa).

The protein belongs to the lyase 1 family. Argininosuccinate lyase subfamily.

Its subcellular location is the cytoplasm. It carries out the reaction 2-(N(omega)-L-arginino)succinate = fumarate + L-arginine. The protein operates within amino-acid biosynthesis; L-arginine biosynthesis; L-arginine from L-ornithine and carbamoyl phosphate: step 3/3. This is Argininosuccinate lyase from Syntrophotalea carbinolica (strain DSM 2380 / NBRC 103641 / GraBd1) (Pelobacter carbinolicus).